Here is a 417-residue protein sequence, read N- to C-terminus: RH-like protein IIF (417 aa).

The next 11 membrane-spanning stretches (helical) occupy residues 12–32 (CLPL…YFFT), 44–64 (LVAS…GFGF), 77–97 (VAFN…LDGF), 125–145 (ISAG…MVLV), 172–192 (FYLF…KPLP), 203–223 (TIPS…WPSF), 238–258 (VFNT…GSSL), 265–285 (ISMT…GTSC), 287–307 (LIPS…ISIG), 331–351 (NFSL…VRHT), and 358–378 (MIGF…AIAL).

It belongs to the ammonium transporter (TC 2.A.49) family. Rh subfamily.

Its subcellular location is the membrane. In terms of biological role, may be part of an oligomeric complex which is likely to have a transport or channel function in the erythrocyte membrane. This is RH-like protein IIF from Pan troglodytes (Chimpanzee).